The sequence spans 228 residues: Small ribosomal subunit protein uS2c (228 aa).

It belongs to the universal ribosomal protein uS2 family.

It localises to the plastid. It is found in the chloroplast. The chain is Small ribosomal subunit protein uS2c (rps2) from Mesostigma viride (Green alga).